The following is a 142-amino-acid chain: Hemoglobin subunit alpha-1 (142 aa).

Serine 1 is modified (N-acetylserine). The Globin domain maps to 1–142; that stretch reads SLSDKDKAAV…VALALAERYR (142 aa). Histidine 59 provides a ligand contact to O2. Position 88 (histidine 88) interacts with heme b.

The protein belongs to the globin family. Hb1 is a heterotetramer of two alpha-2 chains and two beta chains, while Hb2 is a heterotetramer of two alpha-2 chains and two beta chains. Red blood cells.

Involved in oxygen transport from gills to the various peripheral tissues. In Notothenia angustata (Rockcod), this protein is Hemoglobin subunit alpha-1 (hba1).